The following is a 547-amino-acid chain: DNA polymerase kappa (547 aa).

A disordered region spans residues Leu-18–Ala-39. Over residues Ile-20–Glu-31 the composition is skewed to acidic residues. In terms of domain architecture, UmuC spans Ile-132–Gly-316. Residues Asp-136 and Asp-226 each contribute to the Mg(2+) site. The segment at Thr-489–Thr-518 adopts a UBZ4-type zinc-finger fold. The Zn(2+) site is built by Cys-492, Cys-495, His-509, and Cys-513.

As to quaternary structure, interacts with hus1 and rad17.

The protein resides in the cytoplasm. It is found in the nucleus. It catalyses the reaction DNA(n) + a 2'-deoxyribonucleoside 5'-triphosphate = DNA(n+1) + diphosphate. DNA polymerase specifically involved in DNA repair. Plays an important role in translesion synthesis, where the normal high-fidelity DNA polymerases cannot proceed and DNA synthesis stalls. Has a role in meiosis. In Schizosaccharomyces pombe (strain 972 / ATCC 24843) (Fission yeast), this protein is DNA polymerase kappa (mug40).